Reading from the N-terminus, the 304-residue chain is uncharacterized protein (304 aa).

Positions 226–244 (SRNSESSRQSNLNSPNDSV) are enriched in polar residues. Positions 226 to 263 (SRNSESSRQSNLNSPNDSVKFNEFNKSNKSTKTNPNNI) are disordered. Residues 246 to 262 (FNEFNKSNKSTKTNPNN) show a composition bias toward low complexity.

This is an uncharacterized protein from Acanthamoeba polyphaga (Amoeba).